The following is a 479-amino-acid chain: Monodehydroascorbate reductase 1, peroxisomal (479 aa).

Topologically, residues 1–3 (MGR) are cytoplasmic. The chain crosses the membrane as a helical span at residues 4–24 (AFEYVILGGGVAAGYAALEFV). FAD is bound by residues 12–15 (GGVA), glutamate 41, arginine 48, lysine 53, and 147–148 (RN). Residues 25-445 (RRNGGASSQE…QATGGGGKPT (421 aa)) lie on the Peroxisomal side of the membrane. NAD(+)-binding positions include 172-178 (GGYIGME), arginine 202, and glycine 260. NADP(+)-binding positions include 174–178 (YIGME), arginine 202, and glycine 260. Aspartate 297 is a binding site for FAD. Position 314-315 (314-315 (EH)) interacts with NAD(+). 314 to 315 (EH) lines the NADP(+) pocket. Residue valine 316 participates in FAD binding. Arginine 320 contributes to the L-ascorbate binding site. Tyrosine 347 serves as a coordination point for FAD. NAD(+) is bound at residue tyrosine 347. Residue tyrosine 347 participates in NADP(+) binding. An L-ascorbate-binding site is contributed by arginine 349. The helical transmembrane segment at 446-466 (CAWHATVGVAAAVSIAAFACW) threads the bilayer. Topologically, residues 467-479 (YGWQAPYVLKRDF) are cytoplasmic.

This sequence belongs to the FAD-dependent oxidoreductase family. The cofactor is FAD.

The protein resides in the peroxisome membrane. It catalyses the reaction 2 monodehydro-L-ascorbate radical + NADH + H(+) = 2 L-ascorbate + NAD(+). Catalyzes the conversion of monodehydroascorbate to ascorbate, oxidizing NADH in the process. Ascorbate is a major antioxidant against reactive oxygen species (ROS) and nitric oxide (NO). The sequence is that of Monodehydroascorbate reductase 1, peroxisomal from Oryza sativa subsp. japonica (Rice).